We begin with the raw amino-acid sequence, 122 residues long: Large ribosomal subunit protein uL14 (122 aa).

The protein belongs to the universal ribosomal protein uL14 family. As to quaternary structure, part of the 50S ribosomal subunit. Forms a cluster with proteins L3 and L19. In the 70S ribosome, L14 and L19 interact and together make contacts with the 16S rRNA in bridges B5 and B8.

Binds to 23S rRNA. Forms part of two intersubunit bridges in the 70S ribosome. The chain is Large ribosomal subunit protein uL14 from Sinorhizobium fredii (strain NBRC 101917 / NGR234).